The chain runs to 291 residues: Lipoyl synthase (291 aa).

7 residues coordinate [4Fe-4S] cluster: Cys-35, Cys-40, Cys-46, Cys-61, Cys-65, Cys-68, and Ser-273. The Radical SAM core domain maps to 47 to 262 (FGKRQATFLI…KEKALAMGFE (216 aa)).

This sequence belongs to the radical SAM superfamily. Lipoyl synthase family. It depends on [4Fe-4S] cluster as a cofactor.

The protein resides in the cytoplasm. The enzyme catalyses [[Fe-S] cluster scaffold protein carrying a second [4Fe-4S](2+) cluster] + N(6)-octanoyl-L-lysyl-[protein] + 2 oxidized [2Fe-2S]-[ferredoxin] + 2 S-adenosyl-L-methionine + 4 H(+) = [[Fe-S] cluster scaffold protein] + N(6)-[(R)-dihydrolipoyl]-L-lysyl-[protein] + 4 Fe(3+) + 2 hydrogen sulfide + 2 5'-deoxyadenosine + 2 L-methionine + 2 reduced [2Fe-2S]-[ferredoxin]. It functions in the pathway protein modification; protein lipoylation via endogenous pathway; protein N(6)-(lipoyl)lysine from octanoyl-[acyl-carrier-protein]: step 2/2. Functionally, catalyzes the radical-mediated insertion of two sulfur atoms into the C-6 and C-8 positions of the octanoyl moiety bound to the lipoyl domains of lipoate-dependent enzymes, thereby converting the octanoylated domains into lipoylated derivatives. The polypeptide is Lipoyl synthase (Geobacter sp. (strain M21)).